The following is a 526-amino-acid chain: Microphthalmia-associated transcription factor (526 aa).

The interval 20-54 is disordered; it reads EPKTYYELKSQPLKSSSSAEHSGASKPPLSSSTMT. A compositionally biased stretch (low complexity) spans 34–44; that stretch reads SSSSAEHSGAS. Ser180 is modified (phosphoserine; by MAPK). Residue Lys289 forms a Glycyl lysine isopeptide (Lys-Gly) (interchain with G-Cter in SUMO) linkage. The region spanning 311 to 364 is the bHLH domain; it reads QKKDNHNLIERRRRFNINDRIKELGTLIPKSNDPDMRWNKGTILKASVDYIRKL. Positions 355–401 form a coiled coil; sequence KASVDYIRKLQREQQRAKDLENRQKKLEHANRHLLLRVQELEMQARA. A leucine-zipper region spans residues 374–395; the sequence is LENRQKKLEHANRHLLLRVQEL. The residue at position 405 (Ser405) is a Phosphoserine; by GSK3. Residue Ser414 is modified to Phosphoserine. Lys423 participates in a covalent cross-link: Glycyl lysine isopeptide (Lys-Gly) (interchain with G-Cter in SUMO). Ser491 is modified (phosphoserine). The tract at residues 496 to 526 is disordered; it reads TDPLLSSVSPGASKTSSRRSSMSAEETEHAC. The span at 507–519 shows a compositional bias: low complexity; that stretch reads ASKTSSRRSSMSA. At Ser516 the chain carries Phosphoserine; by RPS6KA1.

Belongs to the MiT/TFE family. In terms of assembly, homodimer or heterodimer; dimerization is mediated via the coiled coil region. Efficient DNA binding requires dimerization with another bHLH protein. Binds DNA in the form of homodimer or heterodimer with either TFE3, TFEB or TFEC. Identified in a complex with HINT1 and CTNNB1. Interacts with KARS1. Interacts with VSX2. Post-translationally, phosphorylation at Ser-405 significantly enhances the ability to bind the tyrosinase promoter. Phosphorylated at Ser-180 and Ser-516 following KIT signaling, triggering a short live activation: Phosphorylation at Ser-180 and Ser-516 by MAPK and RPS6KA1, respectively, activate the transcription factor activity but also promote ubiquitination and subsequent degradation by the proteasome. Phosphorylated in response to blue light (415nm). In terms of processing, ubiquitinated following phosphorylation at Ser-180, leading to subsequent degradation by the proteasome. Deubiquitinated by USP13, preventing its degradation.

It is found in the nucleus. The protein resides in the cytoplasm. Functionally, transcription factor that regulates the expression of genes with essential roles in cell differentiation, proliferation and survival. Binds to M-boxes (5'-TCATGTG-3') and symmetrical DNA sequences (E-boxes) (5'-CACGTG-3') found in the promoters of target genes, such as BCL2 and tyrosinase (TYR). Plays an important role in melanocyte development by regulating the expression of tyrosinase (TYR) and tyrosinase-related protein 1 (TYRP1). Plays a critical role in the differentiation of various cell types, such as neural crest-derived melanocytes, mast cells, osteoclasts and optic cup-derived retinal pigment epithelium. The polypeptide is Microphthalmia-associated transcription factor (Mitf) (Rattus norvegicus (Rat)).